The sequence spans 136 residues: Transcription antitermination protein NusB (136 aa).

This sequence belongs to the NusB family.

Involved in transcription antitermination. Required for transcription of ribosomal RNA (rRNA) genes. Binds specifically to the boxA antiterminator sequence of the ribosomal RNA (rrn) operons. This is Transcription antitermination protein NusB from Salinispora tropica (strain ATCC BAA-916 / DSM 44818 / JCM 13857 / NBRC 105044 / CNB-440).